The primary structure comprises 77 residues: Acyl carrier protein (77 aa).

A Carrier domain is found at 1 to 77 (MSVEAKVKKI…DAIEYIRKKS (77 aa)). O-(pantetheine 4'-phosphoryl)serine is present on S37.

It belongs to the acyl carrier protein (ACP) family. 4'-phosphopantetheine is transferred from CoA to a specific serine of apo-ACP by AcpS. This modification is essential for activity because fatty acids are bound in thioester linkage to the sulfhydryl of the prosthetic group.

It localises to the cytoplasm. It functions in the pathway lipid metabolism; fatty acid biosynthesis. In terms of biological role, carrier of the growing fatty acid chain in fatty acid biosynthesis. The chain is Acyl carrier protein from Desulforapulum autotrophicum (strain ATCC 43914 / DSM 3382 / VKM B-1955 / HRM2) (Desulfobacterium autotrophicum).